Consider the following 258-residue polypeptide: Phosphate import ATP-binding protein PstB (258 aa).

One can recognise an ABC transporter domain in the interval 12–253 (LEVKNLNFYY…PARKETEDYI (242 aa)). Position 44 to 51 (44 to 51 (GPSGCGKS)) interacts with ATP.

The protein belongs to the ABC transporter superfamily. Phosphate importer (TC 3.A.1.7) family. As to quaternary structure, the complex is composed of two ATP-binding proteins (PstB), two transmembrane proteins (PstC and PstA) and a solute-binding protein (PstS).

It localises to the cell inner membrane. The enzyme catalyses phosphate(out) + ATP + H2O = ADP + 2 phosphate(in) + H(+). Its function is as follows. Part of the ABC transporter complex PstSACB involved in phosphate import. Responsible for energy coupling to the transport system. This is Phosphate import ATP-binding protein PstB from Bordetella pertussis (strain Tohama I / ATCC BAA-589 / NCTC 13251).